We begin with the raw amino-acid sequence, 680 residues long: Probable oxidoreductase YoaE (680 aa).

Residues 9 to 66 (NGIFKSVCSLDCPDQCGLLIHKKDGKIVKVQGDPDHPVTAGNICNKVRNMTERIYDEK) enclose the 4Fe-4S Mo/W bis-MGD-type domain. [4Fe-4S] cluster-binding residues include Cys16, Cys20, Cys24, and Cys52.

It belongs to the prokaryotic molybdopterin-containing oxidoreductase family. Requires Mo-bis(molybdopterin guanine dinucleotide) as cofactor.

This chain is Probable oxidoreductase YoaE (yoaE), found in Bacillus subtilis (strain 168).